The primary structure comprises 354 residues: Ferredoxin--NADP reductase (354 aa).

7 residues coordinate FAD: D39, Q47, Y52, V92, F127, D296, and T337.

Belongs to the ferredoxin--NADP reductase type 2 family. As to quaternary structure, homodimer. It depends on FAD as a cofactor.

The enzyme catalyses 2 reduced [2Fe-2S]-[ferredoxin] + NADP(+) + H(+) = 2 oxidized [2Fe-2S]-[ferredoxin] + NADPH. The protein is Ferredoxin--NADP reductase of Albidiferax ferrireducens (strain ATCC BAA-621 / DSM 15236 / T118) (Rhodoferax ferrireducens).